Here is a 96-residue protein sequence, read N- to C-terminus: Co-chaperonin GroES (96 aa).

Belongs to the GroES chaperonin family. In terms of assembly, heptamer of 7 subunits arranged in a ring. Interacts with the chaperonin GroEL.

Its subcellular location is the cytoplasm. Functionally, together with the chaperonin GroEL, plays an essential role in assisting protein folding. The GroEL-GroES system forms a nano-cage that allows encapsulation of the non-native substrate proteins and provides a physical environment optimized to promote and accelerate protein folding. GroES binds to the apical surface of the GroEL ring, thereby capping the opening of the GroEL channel. This Buchnera aphidicola subsp. Myzus persicae (Myzus persicae primary endosymbiont) protein is Co-chaperonin GroES.